The following is a 452-amino-acid chain: Methionine aminopeptidase 2-1 (452 aa).

Residues 1–100 (MAAKVADDVA…VRIDEVFPND (100 aa)) are disordered. The segment covering 37–51 (EHDDSDDDNEAEDGA) has biased composition (acidic residues). Positions 60–73 (KKKKKRKPRKKKKA) are enriched in basic residues. Histidine 205 contributes to the substrate binding site. Aspartate 225, aspartate 236, and histidine 305 together coordinate a divalent metal cation. Position 313 (histidine 313) interacts with substrate. Residues glutamate 338 and glutamate 433 each coordinate a divalent metal cation.

This sequence belongs to the peptidase M24A family. Methionine aminopeptidase eukaryotic type 2 subfamily. Co(2+) serves as cofactor. Requires Zn(2+) as cofactor. The cofactor is Mn(2+). Fe(2+) is required as a cofactor.

It is found in the cytoplasm. It carries out the reaction Release of N-terminal amino acids, preferentially methionine, from peptides and arylamides.. Cotranslationally removes the N-terminal methionine from nascent proteins. The N-terminal methionine is often cleaved when the second residue in the primary sequence is small and uncharged (Met-Ala-, Cys, Gly, Pro, Ser, Thr, or Val). In Pyrenophora teres f. teres (strain 0-1) (Barley net blotch fungus), this protein is Methionine aminopeptidase 2-1.